The following is an 808-amino-acid chain: Potassium transporter 5 (808 aa).

At 1 to 65 (MAEEVGETRG…NQVNWKKTLS (65 aa)) the chain is on the cytoplasmic side. Residues 66–86 (LTFQSIGVVYGDIGTSPLYVY) form a helical membrane-spanning segment. Over 87–102 (ESTFPDKIGSKEDILG) the chain is Extracellular. The helical transmembrane segment at 103–123 (VLSLIIYTLVLLPMLKYVFIV) threads the bilayer. Residues 124–189 (LRANDNGDGG…EKMENSKNIK (66 aa)) are Cytoplasmic-facing. The helical transmembrane segment at 190 to 210 (ILLFLVTILGTSMVIGDGVLT) threads the bilayer. The Extracellular portion of the chain corresponds to 211–221 (PCISVLSAVSG). A helical transmembrane segment spans residues 222–242 (IGSLGQDAVVGISIAILIVLF). Topologically, residues 243–251 (CAQRLGTDK) are cytoplasmic. A helical transmembrane segment spans residues 252 to 272 (VGFSFAPIILLWFSFIGGIGL). The Extracellular segment spans residues 273 to 302 (YNLFKYDVSVLRAFNPKYMFDYFKRNGKQG). Residues 303–323 (WISLGGVVLAVTGTEAMFADL) traverse the membrane as a helical segment. The Cytoplasmic portion of the chain corresponds to 324–327 (GHFN). The chain crosses the membrane as a helical span at residues 328 to 348 (VQAIQISFSGIVFPALLCAYA). Residues 349–379 (GQAAYLTKFPDDVSKTFYKSIPDPLYWPTFV) are Extracellular-facing. A helical transmembrane segment spans residues 380-400 (VAVAAAIIASQAMISGAFAII). The Cytoplasmic segment spans residues 401 to 424 (SQSLSLGCFPRVKVIHTSAKYEGQ). The helical transmembrane segment at 425-445 (VYIPEVNYILMIACIMVCLGF) threads the bilayer. The Extracellular segment spans residues 446–456 (KTTEKIGNAYG). A helical membrane pass occupies residues 457 to 477 (IAVVAVMVITTCMVTIIMLVV). The Cytoplasmic segment spans residues 478–482 (WRTKM). A helical transmembrane segment spans residues 483-503 (IWIAFFFFGFICIEAVYLSSV). Residues 504-510 (LYKFKDG) are Extracellular-facing. Residues 511–531 (GFLPLAFSFFLMIIMGIWHYI) form a helical membrane-spanning segment. Residues 532-808 (HKERYMYELK…LLRVGMTYEI (277 aa)) lie on the Cytoplasmic side of the membrane. Residues 699 to 722 (LQQPNPSRVSSGSIHSNSGIKSTK) are disordered.

This sequence belongs to the HAK/KUP transporter (TC 2.A.72.3) family. In terms of tissue distribution, expressed in the roots.

The protein resides in the cell membrane. The catalysed reaction is K(+)(in) = K(+)(out). High-affinity potassium transporter that functions under low potassium conditions. Involved in the positive regulation of salt tolerance under salt stress. This is Potassium transporter 5 from Manihot esculenta (Cassava).